The primary structure comprises 1458 residues: ATPase family AAA domain-containing protein 2B (1458 aa).

A disordered region spans residues 1–155 (MVNTRKSSLR…LRGEKKGDGD (155 aa)). S16 is subject to Phosphoserine. Positions 23 to 33 (PGAGAEPGATG) are enriched in gly residues. The segment covering 34–58 (GSSHFISSRTRSSKTRAASCPAAKA) has biased composition (low complexity). A phosphoserine mark is found at S79, S81, and S86. A compositionally biased stretch (basic and acidic residues) spans 99-115 (VCKDKSKSRSTGQREEW). Positions 116–129 (NLSTGQARLTSQPG) are enriched in polar residues. S140 carries the post-translational modification Phosphoserine. T221 carries the phosphothreonine modification. Positions 244–286 (NSYGIQNHHEVSTEGEEEESQEEDGDIEVEEAEGEENDRPYNL) are disordered. Acidic residues predominate over residues 256–279 (TEGEEEESQEEDGDIEVEEAEGEE). S318 carries the post-translational modification Phosphoserine. Residues 321 to 332 (RRSHIRRKKHAI) show a composition bias toward basic residues. Residues 321 to 353 (RRSHIRRKKHAIHSSDTTSSDEERFERRKSKSM) form a disordered region. An ATP-binding site is contributed by 441–448 (GPPGTGKT). The residue at position 939 (S939) is a Phosphoserine. Positions 943–974 (QLSESEKSRMEDQEENTLRELRLFLRDVTKRL) form a coiled coil. Residues 951–1066 (RMEDQEENTL…DTAHAIIAAE (116 aa)) form the Bromo domain. 3 disordered regions span residues 1189–1208 (DCHE…NDES), 1217–1257 (QGQR…EQTS), and 1309–1330 (LLED…DDLE). Residues 1240–1252 (NESLLVNSSSSLN) are compositionally biased toward low complexity. S1338 and S1347 each carry phosphoserine.

Belongs to the AAA ATPase family. Binds acetylated lysine residues in histone H1.4, H2A, H2B, H3 and H4 (in vitro).

It localises to the nucleus. The polypeptide is ATPase family AAA domain-containing protein 2B (ATAD2B) (Homo sapiens (Human)).